A 229-amino-acid polypeptide reads, in one-letter code: 2-C-methyl-D-erythritol 4-phosphate cytidylyltransferase (229 aa).

It belongs to the IspD/TarI cytidylyltransferase family. IspD subfamily.

It carries out the reaction 2-C-methyl-D-erythritol 4-phosphate + CTP + H(+) = 4-CDP-2-C-methyl-D-erythritol + diphosphate. It functions in the pathway isoprenoid biosynthesis; isopentenyl diphosphate biosynthesis via DXP pathway; isopentenyl diphosphate from 1-deoxy-D-xylulose 5-phosphate: step 2/6. In terms of biological role, catalyzes the formation of 4-diphosphocytidyl-2-C-methyl-D-erythritol from CTP and 2-C-methyl-D-erythritol 4-phosphate (MEP). The sequence is that of 2-C-methyl-D-erythritol 4-phosphate cytidylyltransferase from Clostridium botulinum (strain Loch Maree / Type A3).